The following is a 33-amino-acid chain: Gaegurin-3 (33 aa).

An intrachain disulfide couples Cys27 to Cys33.

The protein belongs to the frog skin active peptide (FSAP) family. Brevinin subfamily. In terms of assembly, monomer. Expressed by the skin glands.

It localises to the secreted. In terms of biological role, has a non-hemolytic activity. Has a broad spectrum of activity against both Gram-positive and Gram-negative bacteria, fungi and protozoa. In Glandirana rugosa (Japanese wrinkled frog), this protein is Gaegurin-3 (GGN3).